Consider the following 173-residue polypeptide: ESALERRSSSVVMNNVMKKPDLSDPKLRAKLAKGMGRNYYGEPAWPNDLLYMFPVCILGTFAAIVGLAVMQPTPTGEPANPFATPLEILPEWYFFPTFNLLRVIPNKLLGVLSMAAVPAGLITVPFIENVNKFQNPFRRPVATSVFLLGTVVAIWLGIGATLPIDKAISLGFW.

The transit peptide at E1–N14 directs the protein to the chloroplast. The next 3 membrane-spanning stretches (helical) occupy residues L49 to V69, L108 to E128, and S144 to I164.

The protein belongs to the cytochrome b family. PetD subfamily. The 4 large subunits of the cytochrome b6-f complex are cytochrome b6, subunit IV (17 kDa polypeptide, petD), cytochrome f and the Rieske protein, while the 4 small subunits are petG, petL, petM and petN. The complex functions as a dimer.

Its subcellular location is the plastid. The protein resides in the chloroplast thylakoid membrane. Component of the cytochrome b6-f complex, which mediates electron transfer between photosystem II (PSII) and photosystem I (PSI), cyclic electron flow around PSI, and state transitions. The polypeptide is Cytochrome b6-f complex subunit 4, chloroplastic (Euglena gracilis).